A 614-amino-acid polypeptide reads, in one-letter code: Selenocysteine-specific elongation factor (614 aa).

Residues 1–173 (MIIATAGHVD…LPEREHASQH (173 aa)) form the tr-type G domain. The segment at 7 to 14 (GHVDHGKT) is G1. 7–14 (GHVDHGKT) contributes to the GTP binding site. The tract at residues 35-39 (GMTID) is G2. The tract at residues 57–60 (DVPG) is G3. GTP-binding positions include 57–61 (DVPGH) and 112–115 (TKAD). The segment at 112–115 (TKAD) is G4. Positions 147–149 (AAT) are G5.

The protein belongs to the TRAFAC class translation factor GTPase superfamily. Classic translation factor GTPase family. SelB subfamily.

Its subcellular location is the cytoplasm. In terms of biological role, translation factor necessary for the incorporation of selenocysteine into proteins. It probably replaces EF-Tu for the insertion of selenocysteine directed by the UGA codon. SelB binds GTP and GDP. This Escherichia coli (strain K12) protein is Selenocysteine-specific elongation factor (selB).